Here is a 160-residue protein sequence, read N- to C-terminus: Endoribonuclease YbeY (160 aa).

Zn(2+) is bound by residues histidine 123, histidine 127, and histidine 133.

This sequence belongs to the endoribonuclease YbeY family. The cofactor is Zn(2+).

The protein localises to the cytoplasm. Functionally, single strand-specific metallo-endoribonuclease involved in late-stage 70S ribosome quality control and in maturation of the 3' terminus of the 16S rRNA. The polypeptide is Endoribonuclease YbeY (Shouchella clausii (strain KSM-K16) (Alkalihalobacillus clausii)).